Here is an 84-residue protein sequence, read N- to C-terminus: uncharacterized protein (84 aa).

Residues 7 to 23 traverse the membrane as a helical segment; sequence AFSGVIALYGGYLYLRL.

It localises to the membrane. This is an uncharacterized protein from Haemophilus influenzae (strain ATCC 51907 / DSM 11121 / KW20 / Rd).